The primary structure comprises 301 residues: Rhodopsin (301 aa).

The Extracellular segment spans residues 1–18 (LHMIHLHWYQYPPMNPMM). The helical transmembrane segment at 19–43 (YPLLLIFMLFTGILCLAGNFVTIWV) threads the bilayer. At 44-55 (FMNTKSLRTPAN) the chain is on the cytoplasmic side. The chain crosses the membrane as a helical span at residues 56-78 (LLVVNLAMSDFLMMFTMFPPMMV). The Extracellular segment spans residues 79–92 (TCYYHTWTLGPTFC). Cysteine 92 and cysteine 169 are disulfide-bonded. Residues 93–115 (QVYAFLGNLCGCASIWTMVFITF) form a helical membrane-spanning segment. A 'Ionic lock' involved in activated form stabilization motif is present at residues 116-118 (DRY). Residues 116 to 134 (DRYNVIVKGVAGEPLSTKK) lie on the Cytoplasmic side of the membrane. The chain crosses the membrane as a helical span at residues 135–155 (ASLWILSVWVLSTAWCIAPFF). Over 156–182 (GWNHYVPEGNLTGCGTDYLSEDILSRS) the chain is Extracellular. Asparagine 165 is a glycosylation site (N-linked (GlcNAc...) asparagine). Residues 183–204 (YLYIYSTWVYFLPLAITIYCYV) traverse the membrane as a helical segment. At 205-245 (FIIKAVAAHEKGMRDQAKKMGIKSLRNEEAQKTSAECRLAK) the chain is on the cytoplasmic side. A helical membrane pass occupies residues 246–267 (NAMTTVALWFIAWTPCLLINWV). The Extracellular portion of the chain corresponds to 268–278 (GMFARSYLSPV). A helical transmembrane segment spans residues 279–300 (YTIWGYVFAKANAVYNPIVYAI). N6-(retinylidene)lysine is present on lysine 288.

It belongs to the G-protein coupled receptor 1 family. Opsin subfamily. As to quaternary structure, homodimer. Interacts with GNAQ. Contains one covalently linked retinal chromophore.

It is found in the cell projection. The protein localises to the rhabdomere membrane. Its function is as follows. Photoreceptor required for image-forming vision at low light intensity. Can use both retinal and 3-dehydroretinal as visual pigment. Light-induced isomerization of 11-cis to all-trans retinal triggers a conformational change that activates signaling via G-proteins. Signaling via GNAQ probably mediates the activation of phospholipase C. The sequence is that of Rhodopsin (RHO) from Cambarus hubrichti (Salem cave crayfish).